The sequence spans 213 residues: ATP phosphoribosyltransferase (213 aa).

This sequence belongs to the ATP phosphoribosyltransferase family. Short subfamily. In terms of assembly, heteromultimer composed of HisG and HisZ subunits.

It localises to the cytoplasm. It carries out the reaction 1-(5-phospho-beta-D-ribosyl)-ATP + diphosphate = 5-phospho-alpha-D-ribose 1-diphosphate + ATP. It functions in the pathway amino-acid biosynthesis; L-histidine biosynthesis; L-histidine from 5-phospho-alpha-D-ribose 1-diphosphate: step 1/9. Catalyzes the condensation of ATP and 5-phosphoribose 1-diphosphate to form N'-(5'-phosphoribosyl)-ATP (PR-ATP). Has a crucial role in the pathway because the rate of histidine biosynthesis seems to be controlled primarily by regulation of HisG enzymatic activity. The polypeptide is ATP phosphoribosyltransferase (hisG) (Listeria monocytogenes serovar 1/2a (strain ATCC BAA-679 / EGD-e)).